The sequence spans 238 residues: Purine nucleoside phosphorylase DeoD-type (238 aa).

Residue His4 coordinates a purine D-ribonucleoside. Phosphate is bound by residues Gly20, Arg24, Arg43, and 87-90; that span reads RVGS. A purine D-ribonucleoside is bound by residues 179 to 181 and 203 to 204; these read EME and SD. The active-site Proton donor is Asp204.

Belongs to the PNP/UDP phosphorylase family. As to quaternary structure, homohexamer; trimer of homodimers.

The enzyme catalyses a purine D-ribonucleoside + phosphate = a purine nucleobase + alpha-D-ribose 1-phosphate. The catalysed reaction is a purine 2'-deoxy-D-ribonucleoside + phosphate = a purine nucleobase + 2-deoxy-alpha-D-ribose 1-phosphate. Functionally, catalyzes the reversible phosphorolytic breakdown of the N-glycosidic bond in the beta-(deoxy)ribonucleoside molecules, with the formation of the corresponding free purine bases and pentose-1-phosphate. In Mannheimia succiniciproducens (strain KCTC 0769BP / MBEL55E), this protein is Purine nucleoside phosphorylase DeoD-type.